A 485-amino-acid polypeptide reads, in one-letter code: Expansin-like protein 8 (485 aa).

Positions 1 to 21 (MRISIILLSLLFLSLHSLIKA) are cleaved as a signal peptide. The Extracellular portion of the chain corresponds to 22-464 (DITKLSVCGS…QSGHHASSNT (443 aa)). An Expansin-like EG45 domain is found at 26–139 (LSVCGSARAV…QIVSCGYSGN (114 aa)). Intrachain disulfides connect Cys29-Cys70 and Cys73-Cys134. Asn117 and Asn365 each carry an N-linked (GlcNAc...) asparagine glycan. Residues 408-436 (EVNNKPSTTSGTGTTSSKPSSSSGGVSGG) form a disordered region. Over residues 414-431 (STTSGTGTTSSKPSSSSG) the composition is skewed to low complexity. Asn454 carries an N-linked (GlcNAc...) asparagine glycan. Residues 465-485 (NILLPTTFVFFISITILSLLF) form a helical membrane-spanning segment.

Belongs to the expansin family. Expansin A subfamily.

It is found in the membrane. May serve to lubricate the movement of the cellulose microfibrils during cell growth and wall extension and/or may serve to maintain the fluid state of the slug cell wall. The polypeptide is Expansin-like protein 8 (expl8) (Dictyostelium discoideum (Social amoeba)).